The sequence spans 492 residues: Osmoregulated proline transporter OpuE (492 aa).

13 consecutive transmembrane segments (helical) span residues 3-23 (IEIIISLGIYFIAMLLIGWYA), 40-60 (LGPFVTALSAGAADMSGWMLM), 62-82 (VPGAMFATGLSTLWLALGLTI), 125-145 (IVSALIIMIFFTLYTSSGMVS), 161-181 (GLFLTTAVVVLYTLFGGFLAV), 190-210 (AIMFAALVLVPIVAFTHVGGV), 224-244 (LLDIFKGASVISIISYLAWGL), 271-291 (IGMSWMIITVLGSVLTGLIGV), 314-334 (ILFHPLITGFLLSAILAAIMS), 365-385 (LVMIGRLSVLVIAVIAVLLSL), 394-414 (LVGYAWAGFGSAFGPAILLSL), 424-444 (ALAAMIVGAATVLIWITTGLA), and 449-469 (VYEIIPGFILSMIAGIIVSMI).

Belongs to the sodium:solute symporter (SSF) (TC 2.A.21) family.

The protein localises to the cell membrane. It carries out the reaction L-proline(in) + Na(+)(in) = L-proline(out) + Na(+)(out). Functionally, catalyzes the uptake of extracellular proline under high-osmolarity growth conditions. Essential for the use of proline present in the environment as an osmoprotectant. This is Osmoregulated proline transporter OpuE from Bacillus subtilis (strain 168).